Reading from the N-terminus, the 294-residue chain is 4-hydroxy-tetrahydrodipicolinate synthase (294 aa).

Threonine 45 is a binding site for pyruvate. Catalysis depends on tyrosine 133, which acts as the Proton donor/acceptor. Lysine 161 functions as the Schiff-base intermediate with substrate in the catalytic mechanism. Isoleucine 203 contacts pyruvate.

It belongs to the DapA family. In terms of assembly, homotetramer; dimer of dimers.

The protein resides in the cytoplasm. It carries out the reaction L-aspartate 4-semialdehyde + pyruvate = (2S,4S)-4-hydroxy-2,3,4,5-tetrahydrodipicolinate + H2O + H(+). It participates in amino-acid biosynthesis; L-lysine biosynthesis via DAP pathway; (S)-tetrahydrodipicolinate from L-aspartate: step 3/4. Catalyzes the condensation of (S)-aspartate-beta-semialdehyde [(S)-ASA] and pyruvate to 4-hydroxy-tetrahydrodipicolinate (HTPA). This chain is 4-hydroxy-tetrahydrodipicolinate synthase, found in Buchnera aphidicola subsp. Baizongia pistaciae (strain Bp).